The primary structure comprises 228 residues: Prolactin (228 aa).

Positions 1 to 29 are cleaved as a signal peptide; the sequence is MGTKRSSLKGSLLLLLLMSSLFLFKSVES. Cysteine 33 and cysteine 40 are oxidised to a cystine. Phosphoserine is present on residues serine 55, serine 63, and serine 119. 2 disulfide bridges follow: cysteine 87–cysteine 203 and cysteine 220–cysteine 228.

Belongs to the somatotropin/prolactin family. As to quaternary structure, interacts with PRLR.

The protein resides in the secreted. Its function is as follows. Prolactin acts primarily on the mammary gland by promoting lactation, mammogenesis, mitogenesis and osmoregulation. The sequence is that of Prolactin (PRL) from Trichosurus vulpecula (Brush-tailed possum).